We begin with the raw amino-acid sequence, 349 residues long: Crinkler effector protein 5 (349 aa).

Positions 1 to 17 are cleaved as a signal peptide; that stretch reads MVKLFCSIVGVAGSPFS. Residues 18–57 are LQLFLAK domain; the sequence is VEVNEGKTVDDLKKAIKAENLDDPTLRNVAPKNLQLFLAK. The segment at 58 to 108 is DWL domain; that stretch reads KGDAWLRYNEDLDTYLQSEIDTSSYLHMRASWKLSKPTLFGPDVSLGEDVV. The short motif at 109 to 115 is the HVLVXXP motif element; it reads HVLVVVP.

This sequence belongs to the Crinkler effector family.

The protein resides in the secreted. The protein localises to the host nucleus. In terms of biological role, secreted effector that elicits necrosis in host plants, a characteristic of plant innate immunity. In Phytophthora infestans (Potato late blight agent), this protein is Crinkler effector protein 5.